The following is a 393-amino-acid chain: Chorismate synthase (393 aa).

2 residues coordinate NADP(+): Arg40 and Arg46. Residues 129–131, 249–250, Gly301, 316–320, and Arg342 each bind FMN; these read RSS, QA, and KPIPT.

The protein belongs to the chorismate synthase family. In terms of assembly, homotetramer. FMNH2 serves as cofactor.

The enzyme catalyses 5-O-(1-carboxyvinyl)-3-phosphoshikimate = chorismate + phosphate. The protein operates within metabolic intermediate biosynthesis; chorismate biosynthesis; chorismate from D-erythrose 4-phosphate and phosphoenolpyruvate: step 7/7. In terms of biological role, catalyzes the anti-1,4-elimination of the C-3 phosphate and the C-6 proR hydrogen from 5-enolpyruvylshikimate-3-phosphate (EPSP) to yield chorismate, which is the branch point compound that serves as the starting substrate for the three terminal pathways of aromatic amino acid biosynthesis. This reaction introduces a second double bond into the aromatic ring system. In Geobacter sulfurreducens (strain ATCC 51573 / DSM 12127 / PCA), this protein is Chorismate synthase.